The chain runs to 237 residues: MNIFDRKINFDALLKFSHITPSTQQHLKKVYASFALCMFVAAAGAYVHVVTRFIQAGLLSALGSLGLMIWLMATPHSHETEQKRLGLLAGFAFLTGVGLGPALDLCIAINPSILPTAFMGTAMIFTCFTLSALYARRRSYLFLGGILMSAMSLMVLSSLGNLFFGSIWLFQANLYVGLVVMCGFVLFDTQLIIEKAENGDKDYIWHCVDLFSDFVTLFRKLMMILAMNEKDKKKEKK.

Residues 1–29 (MNIFDRKINFDALLKFSHITPSTQQHLKK) are Cytoplasmic-facing. Residue K7 forms a Glycyl lysine isopeptide (Lys-Gly) (interchain with G-Cter in ubiquitin) linkage. The chain crosses the membrane as a helical span at residues 30 to 50 (VYASFALCMFVAAAGAYVHVV). Residues 51–52 (TR) lie on the Lumenal side of the membrane. Residues 53 to 73 (FIQAGLLSALGSLGLMIWLMA) traverse the membrane as a helical segment. Residues 74–86 (TPHSHETEQKRLG) are Cytoplasmic-facing. A helical transmembrane segment spans residues 87–107 (LLAGFAFLTGVGLGPALDLCI). The Lumenal segment spans residues 108-112 (AINPS). The helical transmembrane segment at 113–133 (ILPTAFMGTAMIFTCFTLSAL) threads the bilayer. Topologically, residues 134 to 139 (YARRRS) are cytoplasmic. The helical transmembrane segment at 140 to 160 (YLFLGGILMSAMSLMVLSSLG) threads the bilayer. The Lumenal portion of the chain corresponds to 161–166 (NLFFGS). The chain crosses the membrane as a helical span at residues 167–187 (IWLFQANLYVGLVVMCGFVLF). Residues 188–206 (DTQLIIEKAENGDKDYIWH) lie on the Cytoplasmic side of the membrane. Residues 207–227 (CVDLFSDFVTLFRKLMMILAM) constitute an intramembrane region (helical). Over 228–237 (NEKDKKKEKK) the chain is Cytoplasmic.

Belongs to the BI1 family. Interacts with BCL2 and BCL2L1. Interacts with ERN1. In terms of processing, ubiquitinated by BFAR, leading to proteasomal degradation.

It localises to the endoplasmic reticulum membrane. Endoplasmic reticulum (ER)-resident protein that confers cellular protection as an anti-apoptotic protein by limiting multiple stress-inducing pathways surrounding the endoplasmic reticulum and mitochondria. Inhibits the activities of the key sensor for the endoplasmic reticulum unfolded protein response IRE1alpha/ERN1 both directly and by blocking BAX/BAK binding. Modulates ER calcium homeostasis by acting as a calcium-leak channel. Negatively regulates autophagy and autophagosome formation, especially during periods of nutrient deprivation, and reduces cell survival during starvation. This chain is Bax inhibitor 1 (TMBIM6), found in Sus scrofa (Pig).